The primary structure comprises 143 residues: Putative transcriptional regulatory protein PH0763 (143 aa).

Belongs to the Tfx family.

In terms of biological role, putative transcriptional regulator. The protein is Putative transcriptional regulatory protein PH0763 of Pyrococcus horikoshii (strain ATCC 700860 / DSM 12428 / JCM 9974 / NBRC 100139 / OT-3).